Consider the following 309-residue polypeptide: tRNA dimethylallyltransferase (309 aa).

Residue 11–18 (GPTASGKS) coordinates ATP. 13-18 (TASGKS) contributes to the substrate binding site. Interaction with substrate tRNA regions lie at residues 36–39 (DSMQ) and 160–164 (QRLLR).

This sequence belongs to the IPP transferase family. Monomer. Mg(2+) is required as a cofactor.

The enzyme catalyses adenosine(37) in tRNA + dimethylallyl diphosphate = N(6)-dimethylallyladenosine(37) in tRNA + diphosphate. In terms of biological role, catalyzes the transfer of a dimethylallyl group onto the adenine at position 37 in tRNAs that read codons beginning with uridine, leading to the formation of N6-(dimethylallyl)adenosine (i(6)A). The chain is tRNA dimethylallyltransferase from Caulobacter sp. (strain K31).